Here is a 437-residue protein sequence, read N- to C-terminus: 26S proteasome subunit RPT4 (437 aa).

The segment at Met1–Glu51 is disordered. Ser2 carries the post-translational modification N-acetylserine. Residues His20–Pro32 show a composition bias toward low complexity. A compositionally biased stretch (basic and acidic residues) spans Thr35–Glu51. Gly222 to Thr229 contacts ATP.

Belongs to the AAA ATPase family. N-acetylated by NAT1.

Its function is as follows. The 26S proteasome is involved in the ATP-dependent degradation of ubiquitinated proteins. The regulatory (or ATPase) complex confers ATP dependency and substrate specificity to the 26S complex. In Saccharomyces cerevisiae (strain ATCC 204508 / S288c) (Baker's yeast), this protein is 26S proteasome subunit RPT4 (RPT4).